The primary structure comprises 52 residues: UPF0391 membrane protein ABAYE0050 (52 aa).

The next 2 membrane-spanning stretches (helical) occupy residues 6-26 and 30-50; these read IIFAVIALIASLLGFGGVAGL and FAVILLVIAVILAVIGFISRG.

It belongs to the UPF0391 family.

It localises to the cell membrane. This is UPF0391 membrane protein ABAYE0050 from Acinetobacter baumannii (strain AYE).